Here is a 179-residue protein sequence, read N- to C-terminus: Shikimate kinase (179 aa).

An ATP-binding site is contributed by 11-16 (GAGKTT). Threonine 15 is a Mg(2+) binding site. Substrate-binding residues include aspartate 33, arginine 57, and glycine 79. Arginine 118 serves as a coordination point for ATP. Arginine 140 contacts substrate.

The protein belongs to the shikimate kinase family. In terms of assembly, monomer. Mg(2+) is required as a cofactor.

Its subcellular location is the cytoplasm. It carries out the reaction shikimate + ATP = 3-phosphoshikimate + ADP + H(+). Its pathway is metabolic intermediate biosynthesis; chorismate biosynthesis; chorismate from D-erythrose 4-phosphate and phosphoenolpyruvate: step 5/7. Its function is as follows. Catalyzes the specific phosphorylation of the 3-hydroxyl group of shikimic acid using ATP as a cosubstrate. The polypeptide is Shikimate kinase (Bacteroides fragilis (strain ATCC 25285 / DSM 2151 / CCUG 4856 / JCM 11019 / LMG 10263 / NCTC 9343 / Onslow / VPI 2553 / EN-2)).